We begin with the raw amino-acid sequence, 72 residues long: Translation initiation factor IF-1 (72 aa).

In terms of domain architecture, S1-like spans 1–72 (MSKDDCIEFE…TKGRIIYRMK (72 aa)).

Belongs to the IF-1 family. Component of the 30S ribosomal translation pre-initiation complex which assembles on the 30S ribosome in the order IF-2 and IF-3, IF-1 and N-formylmethionyl-tRNA(fMet); mRNA recruitment can occur at any time during PIC assembly.

Its subcellular location is the cytoplasm. In terms of biological role, one of the essential components for the initiation of protein synthesis. Stabilizes the binding of IF-2 and IF-3 on the 30S subunit to which N-formylmethionyl-tRNA(fMet) subsequently binds. Helps modulate mRNA selection, yielding the 30S pre-initiation complex (PIC). Upon addition of the 50S ribosomal subunit IF-1, IF-2 and IF-3 are released leaving the mature 70S translation initiation complex. This chain is Translation initiation factor IF-1, found in Xylella fastidiosa (strain 9a5c).